We begin with the raw amino-acid sequence, 406 residues long: Cysteine desulfurase IscS (406 aa).

Residues Ala75–Thr76, Asn155, Gln183, and Ser203–His205 each bind pyridoxal 5'-phosphate. Residue Lys206 is modified to N6-(pyridoxal phosphate)lysine. A pyridoxal 5'-phosphate-binding site is contributed by Thr243. Cys330 serves as the catalytic Cysteine persulfide intermediate. Residue Cys330 participates in [2Fe-2S] cluster binding.

It belongs to the class-V pyridoxal-phosphate-dependent aminotransferase family. NifS/IscS subfamily. In terms of assembly, homodimer. Forms a heterotetramer with IscU, interacts with other sulfur acceptors. Pyridoxal 5'-phosphate serves as cofactor.

It is found in the cytoplasm. It catalyses the reaction (sulfur carrier)-H + L-cysteine = (sulfur carrier)-SH + L-alanine. It functions in the pathway cofactor biosynthesis; iron-sulfur cluster biosynthesis. In terms of biological role, master enzyme that delivers sulfur to a number of partners involved in Fe-S cluster assembly, tRNA modification or cofactor biosynthesis. Catalyzes the removal of elemental sulfur atoms from cysteine to produce alanine. Functions as a sulfur delivery protein for Fe-S cluster synthesis onto IscU, an Fe-S scaffold assembly protein, as well as other S acceptor proteins. This chain is Cysteine desulfurase IscS, found in Glaesserella parasuis serovar 5 (strain SH0165) (Haemophilus parasuis).